The primary structure comprises 439 residues: MKKPLRWLAALTALLLPLSAFAQQQGLTIDIVGGSASATPITVVPMPYQGSGTAPQTDVSAVVSADLDRSGQFRTLPAAQIVEKPTRGTEVQFQTWRTLKQNYIVVGRVMDAGEGAYRVEYELFDVAKGERLLGLAMTARANAMRDVSHQMADAIYEKVTGVRGAFWTRIAYVTASGSGGSMRYALMVADSDGYNPQTIVRSAEPLLSPNWSPDGKKLAYVSFERGNSSIYLQDIASGARELVSSFRGINGAPSFSPDGRRLALALSRSGNPEIYVMDLGSKQLTQLTNHFGIDTEPTWAPDGGSIYFTSDRGGRPQIYQVAASGGSANRVTFQGNYNATASVSFDGKKVAVAQGSGNTYRIAMMDRSLGSPSWSTLSPGSLDESPSFAPNASMVLYAAREGGRGVLYAVSADARVRQRLVLADGDVREPAWGPYRTAH.

Positions 1-22 (MKKPLRWLAALTALLLPLSAFA) are cleaved as a signal peptide.

This sequence belongs to the TolB family. As to quaternary structure, the Tol-Pal system is composed of five core proteins: the inner membrane proteins TolA, TolQ and TolR, the periplasmic protein TolB and the outer membrane protein Pal. They form a network linking the inner and outer membranes and the peptidoglycan layer.

It localises to the periplasm. Part of the Tol-Pal system, which plays a role in outer membrane invagination during cell division and is important for maintaining outer membrane integrity. This is Tol-Pal system protein TolB from Xanthomonas campestris pv. campestris (strain 8004).